The sequence spans 382 residues: Ribosomal RNA large subunit methyltransferase G (382 aa).

Belongs to the methyltransferase superfamily. RlmG family.

Its subcellular location is the cytoplasm. The enzyme catalyses guanosine(1835) in 23S rRNA + S-adenosyl-L-methionine = N(2)-methylguanosine(1835) in 23S rRNA + S-adenosyl-L-homocysteine + H(+). Specifically methylates the guanine in position 1835 (m2G1835) of 23S rRNA. The sequence is that of Ribosomal RNA large subunit methyltransferase G from Aliivibrio fischeri (strain MJ11) (Vibrio fischeri).